A 200-amino-acid chain; its full sequence is Holliday junction resolvase RecU (200 aa).

The Mg(2+) site is built by threonine 85, aspartate 87, glutamate 100, and glutamine 119.

It belongs to the RecU family. Requires Mg(2+) as cofactor.

The protein resides in the cytoplasm. It carries out the reaction Endonucleolytic cleavage at a junction such as a reciprocal single-stranded crossover between two homologous DNA duplexes (Holliday junction).. In terms of biological role, endonuclease that resolves Holliday junction intermediates in genetic recombination. Cleaves mobile four-strand junctions by introducing symmetrical nicks in paired strands. Promotes annealing of linear ssDNA with homologous dsDNA. Required for DNA repair, homologous recombination and chromosome segregation. The chain is Holliday junction resolvase RecU from Bacillus cytotoxicus (strain DSM 22905 / CIP 110041 / 391-98 / NVH 391-98).